The sequence spans 288 residues: Quinate/shikimate dehydrogenase (288 aa).

Substrate-binding residues include K71 and D107. NAD(+) is bound by residues 132-135 (AGGA), 155-158 (NRRD), K205, 232-235 (CVYN), and G255.

The protein belongs to the shikimate dehydrogenase family. Homodimer.

The enzyme catalyses L-quinate + NAD(+) = 3-dehydroquinate + NADH + H(+). It carries out the reaction L-quinate + NADP(+) = 3-dehydroquinate + NADPH + H(+). It catalyses the reaction shikimate + NADP(+) = 3-dehydroshikimate + NADPH + H(+). The catalysed reaction is shikimate + NAD(+) = 3-dehydroshikimate + NADH + H(+). It functions in the pathway metabolic intermediate biosynthesis; chorismate biosynthesis; chorismate from D-erythrose 4-phosphate and phosphoenolpyruvate: step 4/7. Functionally, the actual biological function of YdiB remains unclear, nor is it known whether 3-dehydroshikimate or quinate represents the natural substrate. Catalyzes the reversible NAD-dependent reduction of both 3-dehydroshikimate (DHSA) and 3-dehydroquinate to yield shikimate (SA) and quinate, respectively. It can use both NAD or NADP for catalysis, however it has higher catalytic efficiency with NAD. The chain is Quinate/shikimate dehydrogenase from Escherichia coli O157:H7.